A 187-amino-acid chain; its full sequence is Small ribosomal subunit protein uS5 (187 aa).

The disordered stretch occupies residues 1–20 (MAERENRRDRRDDRSREETP). In terms of domain architecture, S5 DRBM spans 22–85 (FADRLVAINR…EQAKRQMIRV (64 aa)). Positions 154-174 (DGLKRESSPRQVAQRRGKKVA) are disordered.

This sequence belongs to the universal ribosomal protein uS5 family. In terms of assembly, part of the 30S ribosomal subunit. Contacts proteins S4 and S8.

With S4 and S12 plays an important role in translational accuracy. Functionally, located at the back of the 30S subunit body where it stabilizes the conformation of the head with respect to the body. This is Small ribosomal subunit protein uS5 from Cereibacter sphaeroides (strain ATCC 17025 / ATH 2.4.3) (Rhodobacter sphaeroides).